Reading from the N-terminus, the 932-residue chain is Serine/threonine-protein kinase PknD (932 aa).

In terms of domain architecture, Protein kinase spans 4–291; that stretch reads YDIVRIIGKG…ELKEDIESHL (288 aa). ATP is bound by residues 10–18 and Lys-33; that span reads IGKGGMGEV. The Proton acceptor role is filled by Asp-138.

It belongs to the protein kinase superfamily. Ser/Thr protein kinase family. Autophosphorylated on serine and threonine residues.

The enzyme catalyses L-seryl-[protein] + ATP = O-phospho-L-seryl-[protein] + ADP + H(+). It catalyses the reaction L-threonyl-[protein] + ATP = O-phospho-L-threonyl-[protein] + ADP + H(+). In terms of biological role, together with the serine/threonine kinase Pkn1, may play a role in the specific interactions with host proteins during intracellular growth. The chain is Serine/threonine-protein kinase PknD from Chlamydia pneumoniae (Chlamydophila pneumoniae).